A 134-amino-acid chain; its full sequence is Profilin-3 (134 aa).

An intrachain disulfide couples Cys-13 to Cys-118. The Involved in PIP2 interaction motif lies at 84–100 (AVIRGKKGSGGITIKKT). Thr-114 carries the post-translational modification Phosphothreonine.

This sequence belongs to the profilin family. As to quaternary structure, occurs in many kinds of cells as a complex with monomeric actin in a 1:1 ratio. In terms of processing, phosphorylated by MAP kinases.

The protein localises to the cytoplasm. The protein resides in the cytoskeleton. Binds to actin and affects the structure of the cytoskeleton. At high concentrations, profilin prevents the polymerization of actin, whereas it enhances it at low concentrations. In Olea europaea (Common olive), this protein is Profilin-3.